A 238-amino-acid chain; its full sequence is Pyridoxine 5'-phosphate synthase (238 aa).

Asn-6 is a binding site for 3-amino-2-oxopropyl phosphate. Position 8–9 (8–9 (DH)) interacts with 1-deoxy-D-xylulose 5-phosphate. Arg-17 lines the 3-amino-2-oxopropyl phosphate pocket. The active-site Proton acceptor is the His-42. Positions 44 and 49 each coordinate 1-deoxy-D-xylulose 5-phosphate. Glu-69 functions as the Proton acceptor in the catalytic mechanism. Thr-99 contacts 1-deoxy-D-xylulose 5-phosphate. Residue His-190 is the Proton donor of the active site. Residues Gly-191 and 212 to 213 (GH) each bind 3-amino-2-oxopropyl phosphate.

Belongs to the PNP synthase family. In terms of assembly, homooctamer; tetramer of dimers.

The protein localises to the cytoplasm. The catalysed reaction is 3-amino-2-oxopropyl phosphate + 1-deoxy-D-xylulose 5-phosphate = pyridoxine 5'-phosphate + phosphate + 2 H2O + H(+). Its pathway is cofactor biosynthesis; pyridoxine 5'-phosphate biosynthesis; pyridoxine 5'-phosphate from D-erythrose 4-phosphate: step 5/5. In terms of biological role, catalyzes the complicated ring closure reaction between the two acyclic compounds 1-deoxy-D-xylulose-5-phosphate (DXP) and 3-amino-2-oxopropyl phosphate (1-amino-acetone-3-phosphate or AAP) to form pyridoxine 5'-phosphate (PNP) and inorganic phosphate. This Chlorobium phaeobacteroides (strain BS1) protein is Pyridoxine 5'-phosphate synthase.